An 81-amino-acid chain; its full sequence is U6-theraphotoxin-Hs1a (81 aa).

A signal peptide spans 1–21 (MKASMFLALAGLVLLFVVCYA). Residues 22–48 (SESEEKEFPRELLSTIFAVDDFKGEER) constitute a propeptide that is removed on maturation. Intrachain disulfides connect C50/C65 and C57/C70.

The protein belongs to the neurotoxin 10 (Hwtx-1) family. 51 (Hntx-8) subfamily. In terms of tissue distribution, expressed by the venom gland.

It localises to the secreted. Its function is as follows. Binds to the nicotinic acetylcholine receptor. Blocks neuromuscular transmission. In Cyriopagopus schmidti (Chinese bird spider), this protein is U6-theraphotoxin-Hs1a.